The following is a 282-amino-acid chain: Eukaryotic translation initiation factor 3 subunit G (282 aa).

Positions 1-27 (MSSSKSLDWADDEDYGTGLPSIQTFDN) are disordered. Phosphoserine is present on residues Ser-160 and Ser-164. The region spanning 202-280 (ATLRVTNLSD…LILRCEFSKP (79 aa)) is the RRM domain.

The protein belongs to the eIF-3 subunit G family. As to quaternary structure, component of the eukaryotic translation initiation factor 3 (eIF-3) complex. The eIF-3 complex appears to include tif32/eif3a, SPAC25G10.08/eif3b, tif33/eif3c, SPBC4C3.07/eif3f, tif35/eif3g and sum1/eif3i. This set of common subunits may also associate exclusively with either moe1/eif3d and int6/eif3e, or with SPAC821.05/eif3h and SPAC1751.03/eif3m. The eIF-3 complex may also include SPAC3A12.13c/eif3j.

It is found in the cytoplasm. In terms of biological role, RNA-binding component of the eukaryotic translation initiation factor 3 (eIF-3) complex, which is involved in protein synthesis of a specialized repertoire of mRNAs and, together with other initiation factors, stimulates binding of mRNA and methionyl-tRNAi to the 40S ribosome. The eIF-3 complex specifically targets and initiates translation of a subset of mRNAs involved in cell proliferation. This subunit can bind 18S rRNA. This chain is Eukaryotic translation initiation factor 3 subunit G (tif35), found in Schizosaccharomyces pombe (strain 972 / ATCC 24843) (Fission yeast).